Reading from the N-terminus, the 578-residue chain is mRNA-decapping enzyme 1B (578 aa).

A2 is modified (N-acetylalanine). S144 and S145 each carry phosphoserine. Disordered regions lie at residues A187–Q222 and R246–V265. Basic residues predominate over residues F248 to Q257. Residues S274 and S335 each carry the phosphoserine modification. At T380 the chain carries Phosphothreonine.

It belongs to the DCP1 family. In terms of assembly, interacts with DCP1A.

It is found in the cytoplasm. The protein localises to the nucleus. The enzyme catalyses a 5'-end (N(7)-methyl 5'-triphosphoguanosine)-ribonucleoside in mRNA + H2O = N(7)-methyl-GDP + a 5'-end phospho-ribonucleoside in mRNA + 2 H(+). Functionally, may play a role in the degradation of mRNAs, both in normal mRNA turnover and in nonsense-mediated mRNA decay. May remove the 7-methyl guanine cap structure from mRNA molecules, yielding a 5'-phosphorylated mRNA fragment and 7m-GDP. This is mRNA-decapping enzyme 1B (Dcp1b) from Mus musculus (Mouse).